The chain runs to 487 residues: L-tartrate/succinate antiporter (487 aa).

Residues 1 to 9 are Periplasmic-facing; it reads MKPSTEWWR. Residues 10-30 traverse the membrane as a helical segment; that stretch reads YLAPLAVIAIIALLPVPAGLE. The Cytoplasmic portion of the chain corresponds to 31–32; sequence NH. The next 2 membrane-spanning stretches (helical) occupy residues 33–53 and 54–74; these read TWLYFAVFTGVIVGLILEPVP and GAVVAMVGISIIAILSPWLLF. The Cytoplasmic portion of the chain corresponds to 75–92; it reads SPEQLAQPGFKFTAKSLS. The chain crosses the membrane as a helical span at residues 93-113; it reads WAVSGFSNSVIWLIFAAFMFG. Topologically, residues 114-136 are periplasmic; sequence TGYEKTGLGRRIALILVKKMGHR. A helical membrane pass occupies residues 137 to 157; the sequence is TLFLGYAVMFSELILAPVTPS. Residues 158–188 lie on the Cytoplasmic side of the membrane; the sequence is NSARGAGIIYPIIRNLPPLYQSQPNDSSSRS. A helical membrane pass occupies residues 189–209; the sequence is IGSYIMWMGIVADCVTSAIFL. Topologically, residues 210-235 are periplasmic; it reads TAMAPNLLLIGLMKSASHATLSWGDW. The chain crosses the membrane as a helical span at residues 236-256; it reads FLGMLPLSILLVLLVPWLAYV. Topologically, residues 257–291 are cytoplasmic; that stretch reads LYPPVLKSGDQVPRWAETELQAMGPLCSREKRMLG. A run of 2 helical transmembrane segments spans residues 292-312 and 313-333; these read LMVGALVLWIFGGDYIDAAMV and GYSVVALMLLLRIISWDDIVS. The Cytoplasmic portion of the chain corresponds to 334–339; sequence NKAAWN. The helical transmembrane segment at 340–360 threads the bilayer; it reads VFFWLASLITLATGLNNTGFI. The Periplasmic segment spans residues 361–369; it reads SWFGKLLAG. Residues 370-390 form a helical membrane-spanning segment; that stretch reads SLSGYSPTMVMVALIVVFYLL. Topologically, residues 391–392 are cytoplasmic; the sequence is RY. Residues 393–413 traverse the membrane as a helical segment; that stretch reads FFASATAYTSALAPMMIAAAL. Residues 414 to 417 lie on the Periplasmic side of the membrane; it reads AMPE. Residues 418 to 438 traverse the membrane as a helical segment; the sequence is IPLPVFCLMVGAAIGLGSILT. The Cytoplasmic segment spans residues 439–464; the sequence is PYATGPSPIYYGSGYLPTADYWRLGA. A helical transmembrane segment spans residues 465–485; it reads IFGLIFLVLLVITGLLWMPVV. The Periplasmic segment spans residues 486-487; that stretch reads LL.

It belongs to the SLC13A/DASS transporter (TC 2.A.47) family. DIT1 subfamily.

It is found in the cell inner membrane. The catalysed reaction is (2R,3R)-tartrate(out) + succinate(in) = (2R,3R)-tartrate(in) + succinate(out). Functionally, catalyzes the uptake of tartrate in exchange for intracellular succinate. Essential for anaerobic L-tartrate fermentation. The chain is L-tartrate/succinate antiporter from Escherichia coli (strain K12).